The primary structure comprises 483 residues: Replication factor C large subunit (483 aa).

An ATP-binding site is contributed by 43 to 50; it reads GKPGIGKT. Over residues 417-442 the composition is skewed to basic and acidic residues; sequence ELKKKKKEEDAKGKKARGSKKEKEPI. Residues 417–483 are disordered; sequence ELKKKKKEED…KSSQSTLFSF (67 aa). Residues 448 to 457 show a composition bias toward polar residues; it reads SIDSFSSQEP.

It belongs to the activator 1 small subunits family. RfcL subfamily. As to quaternary structure, heteromultimer composed of small subunits (RfcS) and large subunits (RfcL).

Part of the RFC clamp loader complex which loads the PCNA sliding clamp onto DNA. The chain is Replication factor C large subunit from Methanospirillum hungatei JF-1 (strain ATCC 27890 / DSM 864 / NBRC 100397 / JF-1).